The chain runs to 284 residues: Nitrogenase iron protein 1 (284 aa).

17–24 (GKGGIGKS) is a binding site for ATP. Cys105 contributes to the [4Fe-4S] cluster binding site. Arg108 is modified (ADP-ribosylarginine; by dinitrogenase reductase ADP-ribosyltransferase). Cys140 is a binding site for [4Fe-4S] cluster.

The protein belongs to the NifH/BchL/ChlL family. As to quaternary structure, homodimer. [4Fe-4S] cluster is required as a cofactor. Post-translationally, the reversible ADP-ribosylation of Arg-108 inactivates the nitrogenase reductase and regulates nitrogenase activity.

It carries out the reaction N2 + 8 reduced [2Fe-2S]-[ferredoxin] + 16 ATP + 16 H2O = H2 + 8 oxidized [2Fe-2S]-[ferredoxin] + 2 NH4(+) + 16 ADP + 16 phosphate + 6 H(+). Functionally, the key enzymatic reactions in nitrogen fixation are catalyzed by the nitrogenase complex, which has 2 components: the iron protein and the molybdenum-iron protein. This chain is Nitrogenase iron protein 1 (nifH1), found in Methanothermococcus thermolithotrophicus (Methanococcus thermolithotrophicus).